Here is a 361-residue protein sequence, read N- to C-terminus: Putative F-box protein At1g33010 (361 aa).

An F-box domain is found at 4-50; that stretch reads GNTLDSIPTDLILEIFSRLSAKSVGRLRCLSKLWRKGEWFFFSSLQP. Residues 308-339 are disordered; that stretch reads SIRPTEQKHKPTSTETSMSRKDHQVRTIDQPQ.

The sequence is that of Putative F-box protein At1g33010 from Arabidopsis thaliana (Mouse-ear cress).